Here is a 295-residue protein sequence, read N- to C-terminus: Glycine N-acyltransferase (295 aa).

N6-acetyllysine; alternate occurs at positions 15, 126, and 140. N6-succinyllysine; alternate is present on residues K15, K126, and K140. The residue at position 158 (K158) is an N6-acetyllysine. K168 is subject to N6-succinyllysine. At K255 the chain carries N6-acetyllysine; alternate. K255 is modified (N6-succinyllysine; alternate).

Belongs to the glycine N-acyltransferase family. Detected in liver (at protein level).

The protein resides in the mitochondrion. It carries out the reaction an acyl-CoA + glycine = an N-acylglycine + CoA + H(+). The enzyme catalyses benzoyl-CoA + glycine = N-benzoylglycine + CoA + H(+). Functionally, mitochondrial acyltransferase which transfers an acyl group to the N-terminus of glycine and glutamine, although much less efficiently. Can conjugate a multitude of substrates to form a variety of N-acylglycines, thereby detoxify xenobiotics, such as benzoic acid or salicylic acid, and endogenous organic acids, such as isovaleric acid. In Bos taurus (Bovine), this protein is Glycine N-acyltransferase (GLYAT).